The chain runs to 280 residues: Energy-coupling factor transporter ATP-binding protein EcfA1 (280 aa).

Residues 6–241 (LRTENISFQY…SHMLQEIGLD (236 aa)) enclose the ABC transporter domain. An ATP-binding site is contributed by 40 to 47 (GQNGSGKS).

This sequence belongs to the ABC transporter superfamily. Energy-coupling factor EcfA family. Forms a stable energy-coupling factor (ECF) transporter complex composed of 2 membrane-embedded substrate-binding proteins (S component), 2 ATP-binding proteins (A component) and 2 transmembrane proteins (T component).

The protein localises to the cell membrane. Functionally, ATP-binding (A) component of a common energy-coupling factor (ECF) ABC-transporter complex. Unlike classic ABC transporters this ECF transporter provides the energy necessary to transport a number of different substrates. This Bacillus cereus (strain ZK / E33L) protein is Energy-coupling factor transporter ATP-binding protein EcfA1.